Consider the following 141-residue polypeptide: MRQRTIVCPLIQNDGAYLLCKMADDRGVFPGQWALSGGGVEPGERIEEALRREIREELGEQLLLTEITPWTFSDDIRTKTYADGRKEEIYMIYLIFDCVSANREVKINEEFQDYAWVKPEDLVHYDLNVATRKTLRLKGLL.

In terms of domain architecture, Nudix hydrolase spans 1–141 (MRQRTIVCPL…RKTLRLKGLL (141 aa)). Residues 38 to 59 (GGVEPGERIEEALRREIREELG) carry the Nudix box motif.

The protein belongs to the Nudix hydrolase family. NudI subfamily. In terms of assembly, monomer. Mg(2+) is required as a cofactor.

It catalyses the reaction a ribonucleoside 5'-triphosphate + H2O = a ribonucleoside 5'-phosphate + diphosphate + H(+). It carries out the reaction a 2'-deoxyribonucleoside 5'-triphosphate + H2O = a 2'-deoxyribonucleoside 5'-phosphate + diphosphate + H(+). The enzyme catalyses dUTP + H2O = dUMP + diphosphate + H(+). The catalysed reaction is dTTP + H2O = dTMP + diphosphate + H(+). It catalyses the reaction dCTP + H2O = dCMP + diphosphate + H(+). In terms of biological role, catalyzes the hydrolysis of nucleoside triphosphates, with a preference for pyrimidine deoxynucleoside triphosphates (dUTP, dTTP and dCTP). The polypeptide is Nucleoside triphosphatase NudI (Escherichia coli O9:H4 (strain HS)).